Here is a 564-residue protein sequence, read N- to C-terminus: Poly(U)-binding-splicing factor PUF60 (564 aa).

Residues 1-521 (MATATIALQV…EDAEIIVKIF (521 aa)) form an inhibits homodimerization region. Positions 37–61 (KWKPPQGTESIKMENGQSTGTKLGL) are disordered. K48 participates in a covalent cross-link: Glycyl lysine isopeptide (Lys-Gly) (interchain with G-Cter in SUMO2). T65 bears the Phosphothreonine mark. The interval 82–564 (QSIKSVLVKQ…ERFDNSDLSA (483 aa)) is inhibits transcriptional repression, interaction with ERCC3 and apoptosis induction. A Glycyl lysine isopeptide (Lys-Gly) (interchain with G-Cter in SUMO2) cross-link involves residue K85. Position 117 is a phosphoserine (S117). RRM domains follow at residues 134 to 212 (CRVY…RPSN) and 231 to 309 (NRIY…KAVT). Position 249 is a phosphoserine (S249). K256 is modified (N6-acetyllysine). T319 carries the phosphothreonine modification. Residues 421 to 442 (KKEKEEEELFPESERPEMLSEQ) are disordered. K424 is covalently cross-linked (Glycyl lysine isopeptide (Lys-Gly) (interchain with G-Cter in SUMO2)). The segment covering 432–442 (ESERPEMLSEQ) has biased composition (basic and acidic residues). N6-acetyllysine is present on K459. Residue K463 forms a Glycyl lysine isopeptide (Lys-Gly) (interchain with G-Cter in SUMO2) linkage. The region spanning 467–554 (TVMVLRNMVD…RKVVAEVYDQ (88 aa)) is the RRM 3; atypical domain.

It belongs to the RRM half pint family. In terms of assembly, homodimer. Associates with the spliceosome. Found in a complex with RO60 and Y5 RNA. Found in a complex with FUBP1 and far upstream element (FUSE) DNA segment. Interacts directly with ERCC3. Interacts with CDK7 and GTF2H1. Interacts with SRSF11/P54. Interacts with ARGLU1; interaction may be involved in ARGLU1-mediated modulation of alternative splicing.

The protein localises to the nucleus. Its function is as follows. DNA- and RNA-binding protein, involved in several nuclear processes such as pre-mRNA splicing, apoptosis and transcription regulation. In association with FUBP1 regulates MYC transcription at the P2 promoter through the core-TFIIH basal transcription factor. Acts as a transcriptional repressor through the core-TFIIH basal transcription factor. Represses FUBP1-induced transcriptional activation but not basal transcription. Decreases ERCC3 helicase activity. Is also involved in pre-mRNA splicing. Promotes splicing of an intron with weak 3'-splice site and pyrimidine tract in a cooperative manner with U2AF2. Involved in apoptosis induction when overexpressed in HeLa cells. Modulates alternative splicing of several mRNAs. Binds to relaxed DNA of active promoter regions. Binds to the pyrimidine tract and 3'-splice site regions of pre-mRNA; binding is enhanced in presence of U2AF2. Binds to Y5 RNA in association with RO60. Binds to poly(U) RNA. In Rattus norvegicus (Rat), this protein is Poly(U)-binding-splicing factor PUF60.